A 257-amino-acid polypeptide reads, in one-letter code: Thiazole synthase (257 aa).

The active-site Schiff-base intermediate with DXP is Lys-96. Residues Gly-157, 184–185 (AG), and 206–207 (NT) contribute to the 1-deoxy-D-xylulose 5-phosphate site.

Belongs to the ThiG family. As to quaternary structure, homotetramer. Forms heterodimers with either ThiH or ThiS.

The protein resides in the cytoplasm. It carries out the reaction [ThiS sulfur-carrier protein]-C-terminal-Gly-aminoethanethioate + 2-iminoacetate + 1-deoxy-D-xylulose 5-phosphate = [ThiS sulfur-carrier protein]-C-terminal Gly-Gly + 2-[(2R,5Z)-2-carboxy-4-methylthiazol-5(2H)-ylidene]ethyl phosphate + 2 H2O + H(+). The protein operates within cofactor biosynthesis; thiamine diphosphate biosynthesis. Catalyzes the rearrangement of 1-deoxy-D-xylulose 5-phosphate (DXP) to produce the thiazole phosphate moiety of thiamine. Sulfur is provided by the thiocarboxylate moiety of the carrier protein ThiS. In vitro, sulfur can be provided by H(2)S. The protein is Thiazole synthase of Allorhizobium ampelinum (strain ATCC BAA-846 / DSM 112012 / S4) (Agrobacterium vitis (strain S4)).